We begin with the raw amino-acid sequence, 432 residues long: 2-oxoglutarate-dependent dioxygenase AOP2 (432 aa).

The 98-residue stretch at 281–378 folds into the Fe2OG dioxygenase domain; it reads SGDDVEANDD…RYTAAIFTCP (98 aa). Positions 301, 303, and 358 each coordinate Fe cation. Arg369 lines the 2-oxoglutarate pocket.

It belongs to the iron/ascorbate-dependent oxidoreductase family. Fe(2+) serves as cofactor.

Functionally, 2-oxoglutarate-dependent dioxygenase involved in glucosinolates biosynthesis. Catalyzes the conversion of methylsulfinylalkyl glucosinolates to alkenyl glucosinolates. In Arabidopsis thaliana (Mouse-ear cress), this protein is 2-oxoglutarate-dependent dioxygenase AOP2 (AOP2).